The sequence spans 594 residues: Arginine--tRNA ligase (594 aa).

Positions 139–149 match the 'HIGH' region motif; that stretch reads ANPTGPLHVGH.

This sequence belongs to the class-I aminoacyl-tRNA synthetase family. As to quaternary structure, monomer.

The protein localises to the cytoplasm. The catalysed reaction is tRNA(Arg) + L-arginine + ATP = L-arginyl-tRNA(Arg) + AMP + diphosphate. The polypeptide is Arginine--tRNA ligase (Burkholderia mallei (strain NCTC 10247)).